The chain runs to 402 residues: 4-hydroxy-3-methylbut-2-enyl diphosphate reductase (402 aa).

Cysteine 66 lines the [4Fe-4S] cluster pocket. Histidine 96 is a (2E)-4-hydroxy-3-methylbut-2-enyl diphosphate binding site. Dimethylallyl diphosphate is bound at residue histidine 96. Histidine 96 contributes to the isopentenyl diphosphate binding site. Residue cysteine 157 participates in [4Fe-4S] cluster binding. Histidine 185 is a binding site for (2E)-4-hydroxy-3-methylbut-2-enyl diphosphate. Histidine 185 contributes to the dimethylallyl diphosphate binding site. Histidine 185 contributes to the isopentenyl diphosphate binding site. Glutamate 187 acts as the Proton donor in catalysis. (2E)-4-hydroxy-3-methylbut-2-enyl diphosphate is bound at residue threonine 250. Position 288 (cysteine 288) interacts with [4Fe-4S] cluster. Residues serine 317, serine 318, asparagine 319, and serine 379 each contribute to the (2E)-4-hydroxy-3-methylbut-2-enyl diphosphate site. Dimethylallyl diphosphate contacts are provided by serine 317, serine 318, asparagine 319, and serine 379. Positions 317, 318, 319, and 379 each coordinate isopentenyl diphosphate.

Belongs to the IspH family. It depends on [4Fe-4S] cluster as a cofactor.

It carries out the reaction isopentenyl diphosphate + 2 oxidized [2Fe-2S]-[ferredoxin] + H2O = (2E)-4-hydroxy-3-methylbut-2-enyl diphosphate + 2 reduced [2Fe-2S]-[ferredoxin] + 2 H(+). The enzyme catalyses dimethylallyl diphosphate + 2 oxidized [2Fe-2S]-[ferredoxin] + H2O = (2E)-4-hydroxy-3-methylbut-2-enyl diphosphate + 2 reduced [2Fe-2S]-[ferredoxin] + 2 H(+). The protein operates within isoprenoid biosynthesis; dimethylallyl diphosphate biosynthesis; dimethylallyl diphosphate from (2E)-4-hydroxy-3-methylbutenyl diphosphate: step 1/1. It participates in isoprenoid biosynthesis; isopentenyl diphosphate biosynthesis via DXP pathway; isopentenyl diphosphate from 1-deoxy-D-xylulose 5-phosphate: step 6/6. Functionally, catalyzes the conversion of 1-hydroxy-2-methyl-2-(E)-butenyl 4-diphosphate (HMBPP) into a mixture of isopentenyl diphosphate (IPP) and dimethylallyl diphosphate (DMAPP). Acts in the terminal step of the DOXP/MEP pathway for isoprenoid precursor biosynthesis. In Microcystis aeruginosa (strain NIES-843 / IAM M-2473), this protein is 4-hydroxy-3-methylbut-2-enyl diphosphate reductase.